We begin with the raw amino-acid sequence, 207 residues long: Coiled-coil domain-containing protein 124 homolog (207 aa).

The tract at residues 1-90 (MGNPKKRAEK…KAAKKNSSLD (90 aa)) is disordered. Residues 5–71 (KKRAEKAEAA…RLEKEEMESL (67 aa)) adopt a coiled-coil conformation. 2 stretches are compositionally biased toward basic and acidic residues: residues 9–28 (EKAE…KKDA) and 41–65 (NKKE…RLEK).

Belongs to the CCDC124 family. As to quaternary structure, associates with translationally inactive ribosomes in the nonrotated state.

Its subcellular location is the cytoplasm. The protein localises to the nucleus. Its function is as follows. Ribosome-binding protein involved in ribosome hibernation by associating with translationally inactive ribosomes. Required for translational recovery after starvation from stationary phase. May facilitate rapid translation reactivation by stabilizing the recycling-competent state of inactive ribosomes. In Schizosaccharomyces pombe (strain 972 / ATCC 24843) (Fission yeast), this protein is Coiled-coil domain-containing protein 124 homolog.